The chain runs to 598 residues: Mitochondrial distribution and morphology protein 30 (598 aa).

One can recognise an F-box domain in the interval 13-59 (SFTIDHLPPEIWLCISKLVGTSDLHNLCLINRRLYLTITSDEIWKRR).

As to quaternary structure, interacts with SKP1. Component of the probable SCF(MDM30) complex containing CDC53, SKP1, RBX1 and MDM30. Interacts with SKP1 and FZO1.

The protein localises to the cytoplasm. It is found in the mitochondrion. Its pathway is protein modification; protein ubiquitination. Functionally, substrate recognition component of a SCF (SKP1-CUL1-F-box protein) E3 ubiquitin-protein ligase complex which mediates the ubiquitination and subsequent proteasomal degradation of target proteins. Probably recognizes and binds to phosphorylated target proteins. Recognizes FZO1 and regulates the amount of FZO1. Regulatory factor for the mitochondrial fusion machinery. Required for mitochondrial DNA maintenance. The sequence is that of Mitochondrial distribution and morphology protein 30 (MDM30) from Saccharomyces cerevisiae (strain ATCC 204508 / S288c) (Baker's yeast).